A 162-amino-acid polypeptide reads, in one-letter code: Caveolin-2 (162 aa).

Residues M1–K86 are Cytoplasmic-facing. A Phosphotyrosine; by SRC modification is found at Y19. Residues S20, S23, and S36 each carry the phosphoserine modification. The helical intramembrane region spans F87 to L107. The Cytoplasmic portion of the chain corresponds to S108–D162.

It belongs to the caveolin family. As to quaternary structure, monomer or homodimer. Interacts with CAV1; the interaction forms a stable heterooligomeric complex that is required for targeting to lipid rafts and for caveolae formation. Tyrosine phosphorylated forms do not form heterooligomers with the Tyr-19-phosphorylated form existing as a monomer or dimer. Interacts (tyrosine phosphorylated form) with the SH2 domain-containing proteins, RASA1, NCK1 and SRC. Interacts (tyrosine phosphorylated form) with INSR. Interacts (Tyr-19 phosphorylated form) with MAPK1 (phosphorylated form); the interaction, promoted by insulin, leads to nuclear location and MAPK1 activation. Interacts with STAT3; the interaction is increased on insulin-induced tyrosine phosphorylation leading to STAT activation. Post-translationally, phosphorylated on serine and tyrosine residues. CAV1 promotes phosphorylation on Ser-23 which then targets the complex to the plasma membrane, lipid rafts and caveolae. Phosphorylation on Ser-36 appears to modulate mitosis in endothelial cells. Phosphorylation on Tyr-19 is required for insulin-induced phosphorylation of MAPK1 and DNA binding of STAT3. Tyrosine phosphorylation is induced by both EGF and insulin.

The protein localises to the nucleus. The protein resides in the cytoplasm. It localises to the golgi apparatus membrane. It is found in the cell membrane. Its subcellular location is the membrane. The protein localises to the caveola. Its function is as follows. May act as a scaffolding protein within caveolar membranes. Interacts directly with G-protein alpha subunits and can functionally regulate their activity. Acts as an accessory protein in conjunction with CAV1 in targeting to lipid rafts and driving caveolae formation. The Ser-36 phosphorylated form has a role in modulating mitosis in endothelial cells. Positive regulator of cellular mitogenesis of the MAPK signaling pathway. Required for the insulin-stimulated nuclear translocation and activation of MAPK1 and STAT3, and the subsequent regulation of cell cycle progression. This is Caveolin-2 (CAV2) from Canis lupus familiaris (Dog).